The primary structure comprises 507 residues: Glycerol kinase (507 aa).

Thr-14 serves as a coordination point for ADP. The ATP site is built by Thr-14, Thr-15, and Ser-16. Thr-14 is a sn-glycerol 3-phosphate binding site. An ADP-binding site is contributed by Arg-18. Sn-glycerol 3-phosphate is bound by residues Arg-84, Glu-85, Tyr-136, and Asp-246. Residues Arg-84, Glu-85, Tyr-136, Asp-246, and Gln-247 each contribute to the glycerol site. Positions 268 and 311 each coordinate ADP. Thr-268, Gly-311, Gln-315, and Gly-412 together coordinate ATP. The ADP site is built by Gly-412 and Asn-416.

The protein belongs to the FGGY kinase family.

It catalyses the reaction glycerol + ATP = sn-glycerol 3-phosphate + ADP + H(+). It functions in the pathway polyol metabolism; glycerol degradation via glycerol kinase pathway; sn-glycerol 3-phosphate from glycerol: step 1/1. Inhibited by fructose 1,6-bisphosphate (FBP). In terms of biological role, key enzyme in the regulation of glycerol uptake and metabolism. Catalyzes the phosphorylation of glycerol to yield sn-glycerol 3-phosphate. In Vibrio atlanticus (strain LGP32) (Vibrio splendidus (strain Mel32)), this protein is Glycerol kinase.